Here is a 443-residue protein sequence, read N- to C-terminus: Tubulin beta-1/beta-2 chain (443 aa).

Positions 11, 69, 138, 142, 143, 144, 204, and 226 each coordinate GTP. Glu69 serves as a coordination point for Mg(2+). The interval 424–443 is disordered; the sequence is QYQDASAEEEGEFEGEEEEA. The segment covering 429–443 has biased composition (acidic residues); it reads SAEEEGEFEGEEEEA.

Belongs to the tubulin family. As to quaternary structure, dimer of alpha and beta chains. A typical microtubule is a hollow water-filled tube with an outer diameter of 25 nm and an inner diameter of 15 nM. Alpha-beta heterodimers associate head-to-tail to form protofilaments running lengthwise along the microtubule wall with the beta-tubulin subunit facing the microtubule plus end conferring a structural polarity. Microtubules usually have 13 protofilaments but different protofilament numbers can be found in some organisms and specialized cells. It depends on Mg(2+) as a cofactor.

It localises to the cytoplasm. The protein resides in the cytoskeleton. Its function is as follows. Tubulin is the major constituent of microtubules, a cylinder consisting of laterally associated linear protofilaments composed of alpha- and beta-tubulin heterodimers. Microtubules grow by the addition of GTP-tubulin dimers to the microtubule end, where a stabilizing cap forms. Below the cap, tubulin dimers are in GDP-bound state, owing to GTPase activity of alpha-tubulin. In Chlamydomonas reinhardtii (Chlamydomonas smithii), this protein is Tubulin beta-1/beta-2 chain (TUBB1).